The sequence spans 155 residues: Endoribonuclease YbeY (155 aa).

Zn(2+) contacts are provided by H114, H118, and H124.

This sequence belongs to the endoribonuclease YbeY family. Requires Zn(2+) as cofactor.

It localises to the cytoplasm. Single strand-specific metallo-endoribonuclease involved in late-stage 70S ribosome quality control and in maturation of the 3' terminus of the 16S rRNA. The protein is Endoribonuclease YbeY of Erwinia tasmaniensis (strain DSM 17950 / CFBP 7177 / CIP 109463 / NCPPB 4357 / Et1/99).